The following is a 315-amino-acid chain: Ribosomal RNA small subunit methyltransferase H (315 aa).

S-adenosyl-L-methionine-binding positions include 36 to 38 (GGH), Asp56, Phe81, Asp103, and Gln110.

The protein belongs to the methyltransferase superfamily. RsmH family.

Its subcellular location is the cytoplasm. The enzyme catalyses cytidine(1402) in 16S rRNA + S-adenosyl-L-methionine = N(4)-methylcytidine(1402) in 16S rRNA + S-adenosyl-L-homocysteine + H(+). In terms of biological role, specifically methylates the N4 position of cytidine in position 1402 (C1402) of 16S rRNA. The polypeptide is Ribosomal RNA small subunit methyltransferase H (Idiomarina loihiensis (strain ATCC BAA-735 / DSM 15497 / L2-TR)).